We begin with the raw amino-acid sequence, 205 residues long: Ribonuclease HII (205 aa).

Positions 22–205 (RFICGVDEAG…RKSFLKNILR (184 aa)) constitute an RNase H type-2 domain. D28, E29, and D120 together coordinate a divalent metal cation.

This sequence belongs to the RNase HII family. Mn(2+) serves as cofactor. Requires Mg(2+) as cofactor.

The protein localises to the cytoplasm. It carries out the reaction Endonucleolytic cleavage to 5'-phosphomonoester.. Its function is as follows. Endonuclease that specifically degrades the RNA of RNA-DNA hybrids. This chain is Ribonuclease HII, found in Caldicellulosiruptor saccharolyticus (strain ATCC 43494 / DSM 8903 / Tp8T 6331).